A 339-amino-acid polypeptide reads, in one-letter code: MO25-like protein 3 (339 aa).

This sequence belongs to the Mo25 family.

In Caenorhabditis elegans, this protein is MO25-like protein 3 (mop-25.3).